The sequence spans 173 residues: Microfibrillar-associated protein 5 (173 aa).

Positions 1-21 are cleaved as a signal peptide; it reads MSLLGPKVLLFLAAFIITSDW. The short motif at 30–32 is the Cell attachment site element; it reads RGD. An O-linked (GalNAc...) threonine glycan is attached at T54. Residue N79 is glycosylated (N-linked (GlcNAc...) asparagine).

The protein belongs to the MFAP family. In terms of assembly, interacts with TGFB2. Interacts with BMP2. Interacts with FBN1 (via N-terminal domain) and FBN2. In terms of processing, forms intermolecular disulfide bonds either with other MAGP-2 molecules or with other components of the microfibrils. Post-translationally, N- and O-glycosylated. O-glycosylated with core 1 or possibly core 8 glycans. O-glycan heterogeneity at Thr-54: HexHexNAc (major) and HexHexNAc + sulfate (minor).

The protein resides in the secreted. It localises to the extracellular space. The protein localises to the extracellular matrix. Its function is as follows. May play a role in hematopoiesis. In the cardiovascular system, could regulate growth factors or participate in cell signaling in maintaining large vessel integrity. Component of the elastin-associated microfibrils. The polypeptide is Microfibrillar-associated protein 5 (MFAP5) (Homo sapiens (Human)).